A 96-amino-acid chain; its full sequence is Invertase 7 (96 aa).

An N-terminal signal peptide occupies residues 1-19 (MLLQAFIFLLAGFAAKISA). An N-linked (GlcNAc...) asparagine glycan is attached at Asn-23. Residues 39-42 (WMND) and Gln-60 contribute to the substrate site. The active site involves Asp-42. 2 N-linked (GlcNAc...) asparagine glycosylation sites follow: Asn-64 and Asn-76.

It belongs to the glycosyl hydrolase 32 family.

The enzyme catalyses Hydrolysis of terminal non-reducing beta-D-fructofuranoside residues in beta-D-fructofuranosides.. The protein is Invertase 7 (SUC7) of Saccharomyces cerevisiae (Baker's yeast).